Reading from the N-terminus, the 151-residue chain is Large ribosomal subunit protein bL9 (151 aa).

This sequence belongs to the bacterial ribosomal protein bL9 family.

Its function is as follows. Binds to the 23S rRNA. This chain is Large ribosomal subunit protein bL9, found in Pelodictyon phaeoclathratiforme (strain DSM 5477 / BU-1).